The sequence spans 398 residues: Gastric triacylglycerol lipase (398 aa).

A signal peptide spans 1 to 19; sequence MWLLLTMASLISVLGTTHG. Residues Asn-34 and Asn-99 are each glycosylated (N-linked (GlcNAc...) asparagine). One can recognise an AB hydrolase-1 domain in the interval 78 to 377; sequence PVVFLQHGLL…PFYNHLDFIW (300 aa). Ser-172 (nucleophile) is an active-site residue. Cys-246 and Cys-255 form a disulfide bridge. N-linked (GlcNAc...) asparagine glycosylation is found at Asn-271 and Asn-327. Catalysis depends on charge relay system residues Asp-343 and His-372.

It belongs to the AB hydrolase superfamily. Lipase family.

The protein resides in the secreted. The enzyme catalyses a triacylglycerol + H2O = a diacylglycerol + a fatty acid + H(+). The catalysed reaction is 1,2,3-tri-(9Z-octadecenoyl)-glycerol + H2O = 1,2-di-(9Z-octadecenoyl)-sn-glycerol + (9Z)-octadecenoate + H(+). It catalyses the reaction 1,2,3-trioctanoylglycerol + H2O = 1,2-dioctanoyl-sn-glycerol + octanoate + H(+). In terms of biological role, catalyzes the hydrolysis of triacylglycerols to yield free fatty acids, diacylglycerol, monoacylglycerol, and glycerol. Shows a preferential hydrolysis at the sn-3 position of triacylglycerol. In Homo sapiens (Human), this protein is Gastric triacylglycerol lipase (LIPF).